Consider the following 529-residue polypeptide: Hyaluronidase PH-20 (529 aa).

An N-terminal signal peptide occupies residues 1–35 (MGAFTFKHSFFGSFVECSGVLQTVFIFLLIPCCLA). 2 cysteine pairs are disulfide-bonded: Cys59–Cys351 and Cys223–Cys237. Asn81 is a glycosylation site (N-linked (GlcNAc...) asparagine). Glu147 (proton donor) is an active-site residue. N-linked (GlcNAc...) asparagine glycans are attached at residues Asn165 and Asn179. Asn253 and Asn368 each carry an N-linked (GlcNAc...) asparagine glycan. Disulfide bonds link Cys376/Cys387, Cys381/Cys435, and Cys437/Cys464. N-linked (GlcNAc...) asparagine glycosylation occurs at Asn401. The interval 478 to 502 (DEPPITDDTSQNQDSISDITSSAPP) is disordered. Polar residues predominate over residues 487–502 (SQNQDSISDITSSAPP). Ser492 carries GPI-anchor amidated serine lipidation. Positions 493-529 (ISDITSSAPPSSHILPKDLSWCLFLLSIFSQHWKYLL) are cleaved as a propeptide — removed in mature form.

This sequence belongs to the glycosyl hydrolase 56 family. Post-translationally, endoproteolysis (toward the C-terminus producing two disulfide-linked fragments) could activate PH-20. In terms of tissue distribution, testis.

The protein resides in the cell membrane. It catalyses the reaction Random hydrolysis of (1-&gt;4)-linkages between N-acetyl-beta-D-glucosamine and D-glucuronate residues in hyaluronate.. In terms of biological role, involved in sperm-egg adhesion. Upon fertilization sperm must first penetrate a layer of cumulus cells that surrounds the egg before reaching the zona pellucida. The cumulus cells are embedded in a matrix containing hyaluronic acid which is formed prior to ovulation. This protein aids in penetrating the layer of cumulus cells by digesting hyaluronic acid. In Cavia porcellus (Guinea pig), this protein is Hyaluronidase PH-20 (SPAM1).